A 271-amino-acid chain; its full sequence is Putative phosphoenolpyruvate synthase regulatory protein (271 aa).

Residue 151–158 (GVSRSGKT) coordinates ADP.

It belongs to the pyruvate, phosphate/water dikinase regulatory protein family. PSRP subfamily.

The catalysed reaction is [pyruvate, water dikinase] + ADP = [pyruvate, water dikinase]-phosphate + AMP + H(+). The enzyme catalyses [pyruvate, water dikinase]-phosphate + phosphate + H(+) = [pyruvate, water dikinase] + diphosphate. In terms of biological role, bifunctional serine/threonine kinase and phosphorylase involved in the regulation of the phosphoenolpyruvate synthase (PEPS) by catalyzing its phosphorylation/dephosphorylation. This is Putative phosphoenolpyruvate synthase regulatory protein from Paraburkholderia xenovorans (strain LB400).